Here is a 593-residue protein sequence, read N- to C-terminus: Kelch-like protein 2 (593 aa).

The segment at 1–29 (METPPLPPACTKQGHQKPLDSKDENPEKH) is disordered. The segment covering 17-29 (KPLDSKDENPEKH) has biased composition (basic and acidic residues). The 68-residue stretch at 56–123 (CDVTIVAEDM…VYTAEIQVTE (68 aa)) folds into the BTB domain. Kelch repeat units follow at residues 308–353 (LMVV…YMAG), 354–400 (LVFA…VLNG), 402–447 (LYAV…VVGG), 449–496 (LYAV…VLNN), 497–543 (LLYA…AVNG), and 545–591 (LYVV…VIDK).

Component of the BCR(KLHL2) E3 ubiquitin ligase complex, at least composed of CUL3 and KLHL2 and RBX1. Binds actin. Interacts with KLHL12. Interacts (via N-terminus) with FYN (via SH3 domain).

The protein resides in the cytoplasm. Its subcellular location is the cytoskeleton. The protein localises to the cell projection. It is found in the ruffle. It localises to the lamellipodium. The protein resides in the cytosol. The protein operates within protein modification; protein ubiquitination. Its function is as follows. Substrate-specific adapter of a BCR (BTB-CUL3-RBX1) E3 ubiquitin ligase complex that mediates the ubiquitination of target proteins, such as NPTXR, WNK1, WNK3 and WNK4, leading most often to their proteasomal degradation. The BCR(KLHL2) complex catalyzes ubiquitination and degradation of NPTXR. Responsible for degradative ubiquitination of the WNK kinases WNK1, WNK3 and WNK4. Plays a role in the reorganization of the actin cytoskeleton. Promotes growth of cell projections in oligodendrocyte precursors. This is Kelch-like protein 2 from Mus musculus (Mouse).